A 382-amino-acid polypeptide reads, in one-letter code: Carbamoyl phosphate synthase small chain (382 aa).

Residues 1–189 (MIKSALLVLE…GLPEAKKEDE (189 aa)) are CPSase. Residues Ser-47, Gly-241, and Gly-243 each coordinate L-glutamine. One can recognise a Glutamine amidotransferase type-1 domain in the interval 193 to 380 (HVVAYDFGAK…IELIEQYRKT (188 aa)). The active-site Nucleophile is Cys-269. L-glutamine-binding residues include Leu-270, Gln-273, Asn-311, Gly-313, and Phe-314. Active-site residues include His-353 and Glu-355.

Belongs to the CarA family. In terms of assembly, composed of two chains; the small (or glutamine) chain promotes the hydrolysis of glutamine to ammonia, which is used by the large (or ammonia) chain to synthesize carbamoyl phosphate. Tetramer of heterodimers (alpha,beta)4.

It carries out the reaction hydrogencarbonate + L-glutamine + 2 ATP + H2O = carbamoyl phosphate + L-glutamate + 2 ADP + phosphate + 2 H(+). The catalysed reaction is L-glutamine + H2O = L-glutamate + NH4(+). The protein operates within amino-acid biosynthesis; L-arginine biosynthesis; carbamoyl phosphate from bicarbonate: step 1/1. It functions in the pathway pyrimidine metabolism; UMP biosynthesis via de novo pathway; (S)-dihydroorotate from bicarbonate: step 1/3. Its function is as follows. Small subunit of the glutamine-dependent carbamoyl phosphate synthetase (CPSase). CPSase catalyzes the formation of carbamoyl phosphate from the ammonia moiety of glutamine, carbonate, and phosphate donated by ATP, constituting the first step of 2 biosynthetic pathways, one leading to arginine and/or urea and the other to pyrimidine nucleotides. The small subunit (glutamine amidotransferase) binds and cleaves glutamine to supply the large subunit with the substrate ammonia. This chain is Carbamoyl phosphate synthase small chain, found in Escherichia coli O157:H7.